Reading from the N-terminus, the 525-residue chain is MRRRRRRDGFYLAPDFRHREAEDMAGVFDIDLDQPEDAGSEDELEEGGQLNESMDHGGVGPYELGMEHCEKFEISETSVNRGPEKIRPECFELLRVLGKGGYGKVFQVRKVTGANTGKIFAMKVLKKAMIVRNAKDTAHTKAERNILEEVKHPFIVDLIYAFQTGGKLYLILEYLSGGELFMQLEREGIFMEDTACFYLAEISMALGHLHQKGIIYRDLKPENIMLNHQGHVKLTDFGLCKESIHDGTVTHTFCGTIEYMAPEILMRSGHNRAVDWWSLGALMYDMLTGAPPFTGENRKKTIDKILKCKLNLPPYLTQEARDLLKKLLKRNAASRLGAGPGDAGEVQAHPFFRHINWEELLARKVEPPFKPLLQSEEDVSQFDSKFTRQTPVDSPDDSTLSESANQVFLGFTYVAPSVLESVKEKFSFEPKIRSPRRFIGSPRTPVSPVKFSPGDFWGRGASASTANPQTPVEYPMETSGIEQMDVTVSGEASAPLPIRQPNSGPYKKQAFPMISKRPEHLRMNL.

The TOS motif signature appears at F28–L32. Residues L32–E46 show a composition bias toward acidic residues. Positions L32–M54 are disordered. One can recognise a Protein kinase domain in the interval F91 to F352. Residues L97–V105 and K123 contribute to the ATP site. The active-site Proton acceptor is the D218. T252 carries the phosphothreonine; by PDPK1 modification. Residues R353–K423 form the AGC-kinase C-terminal domain. The interval S380–T399 is disordered. Polar residues predominate over residues Q381 to T399. S394 bears the Phosphoserine mark. T412 is subject to Phosphothreonine; by MTOR, NEK6 and NEK7. The interval E424–L525 is autoinhibitory domain. 2 positions are modified to phosphoserine: S434 and S441. T444 is modified (phosphothreonine). Phosphoserine occurs at positions 447 and 452. Residue K516 is modified to N6-acetyllysine.

The protein belongs to the protein kinase superfamily. AGC Ser/Thr protein kinase family. S6 kinase subfamily. In terms of assembly, interacts with PPP1R9A/neurabin-1. Interacts with RPTOR. Interacts with IRS1. Interacts with EIF3B and EIF3C. Interacts with TRAF4. Interacts with POLDIP3. Interacts (via N-terminus) with IER5. In terms of processing, phosphorylation at Thr-412 is regulated by mTORC1. The phosphorylation at this site is maintained by an agonist-dependent autophosphorylation mechanism. Activated by phosphorylation at Thr-252 by PDPK1. Dephosphorylation by PPP1CC at Thr-412 in mitochondrion.

It is found in the cytoplasm. The protein resides in the synapse. The protein localises to the synaptosome. Its subcellular location is the mitochondrion outer membrane. It localises to the mitochondrion. It catalyses the reaction L-seryl-[protein] + ATP = O-phospho-L-seryl-[protein] + ADP + H(+). It carries out the reaction L-threonyl-[protein] + ATP = O-phospho-L-threonyl-[protein] + ADP + H(+). Activation requires multiple phosphorylation events on serine/threonine residues. Activation appears to be first mediated by phosphorylation of multiple sites in the autoinhibitory domain, which facilitates phosphorylation at Thr-412, disrupting the autoinhibitory mechanism and allowing phosphorylation of Thr-252 by PDPK1. The active conformation of the kinase is believed to be stabilized by a mechanism involving three conserved phosphorylation sites located in the kinase domain activation loop (Thr-252) and in the AGC-kinase C-terminal domain (Ser-394 in the middle of the tail/linker region and Thr-412 within a hydrophobic motif at its end). Activated by mTORC1; isoform Alpha I and isoform Alpha II are sensitive to rapamycin, which inhibits activating phosphorylation at Thr-412. Activated by PDPK1. Its function is as follows. Serine/threonine-protein kinase that acts downstream of mTOR signaling in response to growth factors and nutrients to promote cell proliferation, cell growth and cell cycle progression. Regulates protein synthesis through phosphorylation of EIF4B, RPS6 and EEF2K, and contributes to cell survival by repressing the pro-apoptotic function of BAD. Under conditions of nutrient depletion, the inactive form associates with the EIF3 translation initiation complex. Upon mitogenic stimulation, phosphorylation by the mechanistic target of rapamycin complex 1 (mTORC1) leads to dissociation from the EIF3 complex and activation. The active form then phosphorylates and activates several substrates in the pre-initiation complex, including the EIF2B complex and the cap-binding complex component EIF4B. Also controls translation initiation by phosphorylating a negative regulator of EIF4A, PDCD4, targeting it for ubiquitination and subsequent proteolysis. Promotes initiation of the pioneer round of protein synthesis by phosphorylating POLDIP3/SKAR. In response to IGF1, activates translation elongation by phosphorylating EEF2 kinase (EEF2K), which leads to its inhibition and thus activation of EEF2. Also plays a role in feedback regulation of mTORC2 by mTORC1 by phosphorylating MAPKAP1/SIN1, MTOR and RICTOR, resulting in the inhibition of mTORC2 and AKT1 signaling. Also involved in feedback regulation of mTORC1 and mTORC2 by phosphorylating DEPTOR. Mediates cell survival by phosphorylating the pro-apoptotic protein BAD and suppressing its pro-apoptotic function. Phosphorylates mitochondrial URI1 leading to dissociation of a URI1-PPP1CC complex. The free mitochondrial PPP1CC can then dephosphorylate RPS6KB1 at Thr-412, which is proposed to be a negative feedback mechanism for the RPS6KB1 anti-apoptotic function. Mediates TNF-alpha-induced insulin resistance by phosphorylating IRS1 at multiple serine residues, resulting in accelerated degradation of IRS1. In cells lacking functional TSC1-2 complex, constitutively phosphorylates and inhibits GSK3B. May be involved in cytoskeletal rearrangement through binding to neurabin. Phosphorylates and activates the pyrimidine biosynthesis enzyme CAD, downstream of MTOR. Following activation by mTORC1, phosphorylates EPRS and thereby plays a key role in fatty acid uptake by adipocytes and also most probably in interferon-gamma-induced translation inhibition. This Mus musculus (Mouse) protein is Ribosomal protein S6 kinase beta-1 (Rps6kb1).